The chain runs to 214 residues: Ribosomal RNA small subunit methyltransferase G (214 aa).

Residues Gly72, Phe77, 125 to 126 (VE), and Arg141 contribute to the S-adenosyl-L-methionine site.

Belongs to the methyltransferase superfamily. RNA methyltransferase RsmG family.

It is found in the cytoplasm. The enzyme catalyses guanosine(527) in 16S rRNA + S-adenosyl-L-methionine = N(7)-methylguanosine(527) in 16S rRNA + S-adenosyl-L-homocysteine. Its function is as follows. Specifically methylates the N7 position of guanine in position 527 of 16S rRNA. This Sinorhizobium fredii (strain NBRC 101917 / NGR234) protein is Ribosomal RNA small subunit methyltransferase G.